The primary structure comprises 150 residues: Large ribosomal subunit protein bL9 (150 aa).

This sequence belongs to the bacterial ribosomal protein bL9 family.

Binds to the 23S rRNA. The sequence is that of Large ribosomal subunit protein bL9 from Renibacterium salmoninarum (strain ATCC 33209 / DSM 20767 / JCM 11484 / NBRC 15589 / NCIMB 2235).